Consider the following 345-residue polypeptide: Heat-inducible transcription repressor HrcA (345 aa).

It belongs to the HrcA family.

Functionally, negative regulator of class I heat shock genes (grpE-dnaK-dnaJ and groELS operons). Prevents heat-shock induction of these operons. The sequence is that of Heat-inducible transcription repressor HrcA from Listeria welshimeri serovar 6b (strain ATCC 35897 / DSM 20650 / CCUG 15529 / CIP 8149 / NCTC 11857 / SLCC 5334 / V8).